A 763-amino-acid polypeptide reads, in one-letter code: Heat shock 70 kDa protein 16 (763 aa).

2 disordered regions span residues 509-529 (ISEE…PSSG) and 701-763 (EKTT…MELD). Phosphoserine is present on Ser-528. Positions 701–714 (EKTTEQESLPKDAN) are enriched in basic and acidic residues.

This sequence belongs to the heat shock protein 70 (TC 1.A.33) family. HSP110/SSE subfamily.

The sequence is that of Heat shock 70 kDa protein 16 (HSP70-16) from Arabidopsis thaliana (Mouse-ear cress).